The primary structure comprises 164 residues: Thiol peroxidase (164 aa).

The region spanning 16 to 162 (LQVGDIAKDF…YEAAINAAKI (147 aa)) is the Thioredoxin domain. Residue Cys58 is the Cysteine sulfenic acid (-SOH) intermediate of the active site. Cys58 and Cys92 are oxidised to a cystine.

Belongs to the peroxiredoxin family. Tpx subfamily. Homodimer.

The catalysed reaction is a hydroperoxide + [thioredoxin]-dithiol = an alcohol + [thioredoxin]-disulfide + H2O. In terms of biological role, thiol-specific peroxidase that catalyzes the reduction of hydrogen peroxide and organic hydroperoxides to water and alcohols, respectively. Plays a role in cell protection against oxidative stress by detoxifying peroxides. This chain is Thiol peroxidase, found in Streptococcus agalactiae serotype III (strain NEM316).